Reading from the N-terminus, the 378-residue chain is tRNA-specific 2-thiouridylase MnmA (378 aa).

Residues 7–14 (GLSGGVDS) and M33 each bind ATP. The interval 102-104 (NPD) is interaction with target base in tRNA. C107 serves as the catalytic Nucleophile. The cysteines at positions 107 and 209 are disulfide-linked. G132 contributes to the ATP binding site. An interaction with tRNA region spans residues 159–161 (KDQ). C209 functions as the Cysteine persulfide intermediate in the catalytic mechanism. Positions 316–317 (RY) are interaction with tRNA.

The protein belongs to the MnmA/TRMU family.

The protein resides in the cytoplasm. It catalyses the reaction S-sulfanyl-L-cysteinyl-[protein] + uridine(34) in tRNA + AH2 + ATP = 2-thiouridine(34) in tRNA + L-cysteinyl-[protein] + A + AMP + diphosphate + H(+). Its function is as follows. Catalyzes the 2-thiolation of uridine at the wobble position (U34) of tRNA, leading to the formation of s(2)U34. This Aster yellows witches'-broom phytoplasma (strain AYWB) protein is tRNA-specific 2-thiouridylase MnmA.